A 94-amino-acid polypeptide reads, in one-letter code: MFTINAEVRKEQGKGASRRLRAANKFPAIIYGGSEAPIAIELDHDQVMNMQAKAEFYSEVLTLVVDGKEVKVKAQAVQRHAYKPKLTHIDFVRA.

Belongs to the bacterial ribosomal protein bL25 family. As to quaternary structure, part of the 50S ribosomal subunit; part of the 5S rRNA/L5/L18/L25 subcomplex. Contacts the 5S rRNA. Binds to the 5S rRNA independently of L5 and L18.

Functionally, this is one of the proteins that binds to the 5S RNA in the ribosome where it forms part of the central protuberance. In Salmonella agona (strain SL483), this protein is Large ribosomal subunit protein bL25.